Reading from the N-terminus, the 295-residue chain is Adrenocorticotropic hormone receptor (295 aa).

Residues 1-23 (MRHILNLYENINSTARNNSDCPA) lie on the Extracellular side of the membrane. Residues N12 and N17 are each glycosylated (N-linked (GlcNAc...) asparagine). 2 disulfides stabilise this stretch: C21–C253 and C245–C251. Residues 24 to 49 (VILPEEIFFTVSIVGVLENLMVLLAV) form a helical membrane-spanning segment. Over 50–58 (AKNKSLQSP) the chain is Cytoplasmic. The chain crosses the membrane as a helical span at residues 59–79 (MYFFICSLAISDMLGSLYKIL). Residues 80–104 (ENVLIMFRNMGYLEPRGSFESTADD) lie on the Extracellular side of the membrane. Residues 105–126 (VVDSLFILSLLGSICSLSVIAA) traverse the membrane as a helical segment. The Cytoplasmic segment spans residues 127-147 (DRYITIFHALQYHSIVTMHRA). Residues 148-168 (LVVLTVLWAGCTGSGITIVTF) form a helical membrane-spanning segment. Residues 169-180 (SHHVPTVIAFTA) are Extracellular-facing. A helical transmembrane segment spans residues 181 to 199 (LFPLMLAFILCLYVHMFLL). Residues 200 to 217 (ARSHARRTSSLPKANMRG) are Cytoplasmic-facing. A helical transmembrane segment spans residues 218–244 (AITLTVLLGVFIFCWAPFVLHVLLMTF). The Extracellular portion of the chain corresponds to 245–256 (CPADPYCACYMS). Residues 257-278 (LFQVNGVLIMCNAVIDPFIYAF) traverse the membrane as a helical segment. The Cytoplasmic portion of the chain corresponds to 279 to 295 (RSPELRVAFKKMVICNW). A lipid anchor (S-palmitoyl cysteine) is attached at C293.

The protein belongs to the G-protein coupled receptor 1 family. Homodimer. Interacts with corticotropin (ACTH). Interacts with MRAP; this interaction targets MC2R to the plasma membrane. Interacts with MRAP2; competing with MRAP for binding to MC2R and impairing the binding of corticotropin (ACTH). In terms of processing, ubiquitinated by MGRN1 that may be involved in post-endocytic trafficking and/or degradation of internalized receptor.

The protein resides in the cell membrane. Its function is as follows. Hormone receptor primarily expressed in adrenal cortex that plays a key role in regulating adrenocortical function. Upon corticotropin (ACTH) binding, facilitates the release of adrenal glucocorticoids, including cortisol and corticosterone. In addition, MC2R is required for fetal and neonatal adrenal gland development. Mechanistically, activates adenylate cyclase (cAMP), the MAPK cascade as well as the cAMP-dependent protein kinase A pathway leading to steroidogenic factor 1/NR5A1-mediated transcriptional activation. This is Adrenocorticotropic hormone receptor (MC2R) from Ovis aries (Sheep).